Consider the following 156-residue polypeptide: MMSQTLTLCCLGLVACVYGNTVSTNDTACPTFCPSIYKPVCGTDGQNFKEFASTCNLLSHNCRRERNSVQAYAATDAAWCSSEFVENLHEKLGNFKLEVKECFKPCSMIYQPVCITNGKYRAELANSCLLENFNCALQVSGAQPAELFRLLREEKC.

The first 19 residues, 1–19 (MMSQTLTLCCLGLVACVYG), serve as a signal peptide directing secretion. Kazal-like domains lie at 23 to 81 (STND…AWCS) and 96 to 156 (KLEV…EEKC). 5 disulfides stabilise this stretch: Cys-29-Cys-62, Cys-33-Cys-55, Cys-102-Cys-135, Cys-106-Cys-128, and Cys-114-Cys-156.

The protein is Enhancer of split M1 protein of Drosophila simulans (Fruit fly).